The chain runs to 348 residues: Flavonol synthase/flavanone 3-hydroxylase (348 aa).

In terms of domain architecture, Fe2OG dioxygenase spans 209–309; the sequence is EIVYLLKINY…RMSWPVFLEP (101 aa). Histidine 234, aspartate 236, and histidine 290 together coordinate Fe cation.

The protein belongs to the iron/ascorbate-dependent oxidoreductase family. The cofactor is L-ascorbate. Fe cation is required as a cofactor.

It is found in the cytoplasm. It catalyses the reaction a (2R,3R)-dihydroflavonol + 2-oxoglutarate + O2 = a flavonol + succinate + CO2 + H2O. The catalysed reaction is a (2S)-flavan-4-one + 2-oxoglutarate + O2 = a (2R,3R)-dihydroflavonol + succinate + CO2. The protein operates within secondary metabolite biosynthesis; flavonoid biosynthesis. In terms of biological role, catalyzes the formation of flavonols from dihydroflavonols. It can act on dihydrokaempferol to produce kaempferol, on dihydroquercetin to produce quercitin and on dihydromyricetin to produce myricetin. In Petunia hybrida (Petunia), this protein is Flavonol synthase/flavanone 3-hydroxylase (FL).